Consider the following 408-residue polypeptide: Arginine biosynthesis bifunctional protein ArgJ (408 aa).

Residues T158, K184, T195, E281, N403, and T408 each coordinate substrate. T195 (nucleophile) is an active-site residue.

The protein belongs to the ArgJ family. In terms of assembly, heterotetramer of two alpha and two beta chains.

The protein localises to the cytoplasm. It catalyses the reaction N(2)-acetyl-L-ornithine + L-glutamate = N-acetyl-L-glutamate + L-ornithine. The catalysed reaction is L-glutamate + acetyl-CoA = N-acetyl-L-glutamate + CoA + H(+). Its pathway is amino-acid biosynthesis; L-arginine biosynthesis; L-ornithine and N-acetyl-L-glutamate from L-glutamate and N(2)-acetyl-L-ornithine (cyclic): step 1/1. It participates in amino-acid biosynthesis; L-arginine biosynthesis; N(2)-acetyl-L-ornithine from L-glutamate: step 1/4. Functionally, catalyzes two activities which are involved in the cyclic version of arginine biosynthesis: the synthesis of N-acetylglutamate from glutamate and acetyl-CoA as the acetyl donor, and of ornithine by transacetylation between N(2)-acetylornithine and glutamate. The sequence is that of Arginine biosynthesis bifunctional protein ArgJ from Bacillus cereus (strain ATCC 14579 / DSM 31 / CCUG 7414 / JCM 2152 / NBRC 15305 / NCIMB 9373 / NCTC 2599 / NRRL B-3711).